We begin with the raw amino-acid sequence, 399 residues long: Chorismate synthase (399 aa).

NADP(+)-binding residues include R40 and R46. Residues 135 to 137 (RAS), 256 to 257 (QA), G301, 316 to 320 (KPIAT), and R342 contribute to the FMN site.

Belongs to the chorismate synthase family. In terms of assembly, homotetramer. It depends on FMNH2 as a cofactor.

The enzyme catalyses 5-O-(1-carboxyvinyl)-3-phosphoshikimate = chorismate + phosphate. It participates in metabolic intermediate biosynthesis; chorismate biosynthesis; chorismate from D-erythrose 4-phosphate and phosphoenolpyruvate: step 7/7. Its function is as follows. Catalyzes the anti-1,4-elimination of the C-3 phosphate and the C-6 proR hydrogen from 5-enolpyruvylshikimate-3-phosphate (EPSP) to yield chorismate, which is the branch point compound that serves as the starting substrate for the three terminal pathways of aromatic amino acid biosynthesis. This reaction introduces a second double bond into the aromatic ring system. This is Chorismate synthase from Pseudarthrobacter chlorophenolicus (strain ATCC 700700 / DSM 12829 / CIP 107037 / JCM 12360 / KCTC 9906 / NCIMB 13794 / A6) (Arthrobacter chlorophenolicus).